We begin with the raw amino-acid sequence, 453 residues long: 3-phosphoshikimate 1-carboxyvinyltransferase (453 aa).

Positions 1–12 are enriched in polar residues; sequence MDVNVTSSTVRG. The interval 1–21 is disordered; the sequence is MDVNVTSSTVRGTTRAPPSKS. The 3-phosphoshikimate site is built by K20, S21, and R25. K20 contributes to the phosphoenolpyruvate binding site. Positions 97 and 125 each coordinate phosphoenolpyruvate. Residues S170, S171, Q172, S198, D330, and K357 each coordinate 3-phosphoshikimate. Phosphoenolpyruvate is bound at residue Q172. Catalysis depends on D330, which acts as the Proton acceptor. Phosphoenolpyruvate is bound by residues R361 and R404.

Belongs to the EPSP synthase family. In terms of assembly, monomer.

The protein resides in the cytoplasm. It catalyses the reaction 3-phosphoshikimate + phosphoenolpyruvate = 5-O-(1-carboxyvinyl)-3-phosphoshikimate + phosphate. It functions in the pathway metabolic intermediate biosynthesis; chorismate biosynthesis. Functionally, catalyzes the transfer of the enolpyruvyl moiety of phosphoenolpyruvate (PEP) to the 5-hydroxyl of shikimate-3-phosphate (S3P) to produce enolpyruvyl shikimate-3-phosphate and inorganic phosphate. This is 3-phosphoshikimate 1-carboxyvinyltransferase from Halorubrum lacusprofundi (strain ATCC 49239 / DSM 5036 / JCM 8891 / ACAM 34).